The chain runs to 39 residues: Fuctinin-3 (39 aa).

Residues 1–39 are disordered; sequence KELNSNHDGADETSEKEQQEAIEHIDEVQNEIDRLNETA.

The protein to human SET/PHAPII protein. As to quaternary structure, oligomer.

It is found in the cytoplasm. Its function is as follows. Has a role in the physiological regulation of fucosylation processes. In Rattus norvegicus (Rat), this protein is Fuctinin-3.